A 289-amino-acid polypeptide reads, in one-letter code: Energy-coupling factor transporter ATP-binding protein EcfA2 (289 aa).

Residues 7-251 (IILDNVSYTY…IELLTKIEID (245 aa)) form the ABC transporter domain. Position 44–51 (44–51 (GTTGSGKS)) interacts with ATP.

The protein belongs to the ABC transporter superfamily. Energy-coupling factor EcfA family. As to quaternary structure, forms a stable energy-coupling factor (ECF) transporter complex composed of 2 membrane-embedded substrate-binding proteins (S component), 2 ATP-binding proteins (A component) and 2 transmembrane proteins (T component).

Its subcellular location is the cell membrane. ATP-binding (A) component of a common energy-coupling factor (ECF) ABC-transporter complex. Unlike classic ABC transporters this ECF transporter provides the energy necessary to transport a number of different substrates. In Mycoplasma capricolum subsp. capricolum (strain California kid / ATCC 27343 / NCTC 10154), this protein is Energy-coupling factor transporter ATP-binding protein EcfA2.